The chain runs to 404 residues: Formate-dependent phosphoribosylglycinamide formyltransferase (404 aa).

N(1)-(5-phospho-beta-D-ribosyl)glycinamide-binding positions include 25–26 (EL) and Glu85. ATP contacts are provided by residues Arg118, Lys159, 164–169 (SSGKGQ), 199–202 (EGFI), and Glu207. Residues 123–318 (RLAAEELGLP…EFELHARAIL (196 aa)) enclose the ATP-grasp domain. Mg(2+) is bound by residues Glu277 and Glu289. N(1)-(5-phospho-beta-D-ribosyl)glycinamide contacts are provided by residues Asp296, Lys365, and 372-373 (RR).

The protein belongs to the PurK/PurT family. Homodimer.

It carries out the reaction N(1)-(5-phospho-beta-D-ribosyl)glycinamide + formate + ATP = N(2)-formyl-N(1)-(5-phospho-beta-D-ribosyl)glycinamide + ADP + phosphate + H(+). It functions in the pathway purine metabolism; IMP biosynthesis via de novo pathway; N(2)-formyl-N(1)-(5-phospho-D-ribosyl)glycinamide from N(1)-(5-phospho-D-ribosyl)glycinamide (formate route): step 1/1. In terms of biological role, involved in the de novo purine biosynthesis. Catalyzes the transfer of formate to 5-phospho-ribosyl-glycinamide (GAR), producing 5-phospho-ribosyl-N-formylglycinamide (FGAR). Formate is provided by PurU via hydrolysis of 10-formyl-tetrahydrofolate. In Burkholderia pseudomallei (strain 668), this protein is Formate-dependent phosphoribosylglycinamide formyltransferase.